A 159-amino-acid polypeptide reads, in one-letter code: Ribosomal RNA large subunit methyltransferase H (159 aa).

Residues Leu-76 and Gly-108 each contribute to the S-adenosyl-L-methionine site.

Belongs to the RNA methyltransferase RlmH family. Homodimer.

It localises to the cytoplasm. It carries out the reaction pseudouridine(1915) in 23S rRNA + S-adenosyl-L-methionine = N(3)-methylpseudouridine(1915) in 23S rRNA + S-adenosyl-L-homocysteine + H(+). Functionally, specifically methylates the pseudouridine at position 1915 (m3Psi1915) in 23S rRNA. The protein is Ribosomal RNA large subunit methyltransferase H of Limosilactobacillus reuteri (strain DSM 20016) (Lactobacillus reuteri).